The chain runs to 194 residues: Probable DNA-directed RNA polymerase subunit delta (194 aa).

The 70-residue stretch at 14–83 (LSMIEVARAI…GENKWGLRSW (70 aa)) folds into the HTH HARE-type domain. Residues 117–194 (GDEDAIDYSD…SDDEEDEEGE (78 aa)) are disordered.

The protein belongs to the RpoE family. As to quaternary structure, RNAP is composed of a core of 2 alpha, a beta and a beta' subunits. The core is associated with a delta subunit and one of several sigma factors.

Participates in both the initiation and recycling phases of transcription. In the presence of the delta subunit, RNAP displays an increased specificity of transcription, a decreased affinity for nucleic acids, and an increased efficiency of RNA synthesis because of enhanced recycling. In Streptococcus mutans serotype c (strain ATCC 700610 / UA159), this protein is Probable DNA-directed RNA polymerase subunit delta.